The chain runs to 68 residues: Conotoxin Eb11.7 (68 aa).

The signal sequence occupies residues 1 to 26 (MMFRLTSVSCFLLVIVCLNLFQVVLT). Disulfide bonds link Cys-29/Cys-43, Cys-36/Cys-48, Cys-42/Cys-52, and Cys-47/Cys-56. Phe-60 is modified (phenylalanine amide). Residues 64-68 (ATFQE) constitute a propeptide that is removed on maturation.

Belongs to the conotoxin I2 superfamily. Expressed by the venom duct.

The protein resides in the secreted. The chain is Conotoxin Eb11.7 from Conus eburneus (Ivory cone).